We begin with the raw amino-acid sequence, 1431 residues long: Probable ATP-dependent RNA helicase spindle-E (1431 aa).

Positions 127–294 constitute a Helicase ATP-binding domain; sequence LAAIRENPVV…FAMSSSLPPV (168 aa). 140–147 is a binding site for ATP; the sequence is GETGCGKT. Residues 240 to 243 carry the DEAH box motif; that stretch reads DEVH. Residues 354 to 526 enclose the Helicase C-terminal domain; it reads QSQQSYEEAK…NSVLKAKELE (173 aa). The Tudor domain occupies 937 to 1000; sequence AKAVTKGLQL…RLMSPQLKRD (64 aa).

This sequence belongs to the DEAD box helicase family. DEAH subfamily.

The protein localises to the cytoplasm. It catalyses the reaction ATP + H2O = ADP + phosphate + H(+). Its function is as follows. Probable ATP-binding RNA helicase which plays a central role during spermatogenesis and oogenesis by repressing transposable elements and preventing their mobilization, which is essential for the germline integrity. Acts via the piRNA metabolic process, which mediates the repression of transposable elements during meiosis by forming complexes composed of piRNAs and Piwi and govern the methylation and subsequent repression of transposons. Involved in the repression of LTR retrotransposon copia. Also involved in telomere regulation by repressing specialized telomeric retroelements HeT-A, TAHRE, and TART; Drosophila telomeres being maintained by transposition of specialized telomeric retroelements. Involved in telomeric trans-silencing, a repression mechanism by which a transposon or a transgene inserted in subtelomeric heterochromatin has the capacity to repress in trans in the female germline, a homologous transposon, or transgene located in euchromatin. Involved in the repression of testis-expressed Stellate genes by the homologous Su(Ste) repeats. Required for anteroposterior and dorsoventral axis formation during oogenesis. The chain is Probable ATP-dependent RNA helicase spindle-E (spn-E) from Drosophila mojavensis (Fruit fly).